The chain runs to 159 residues: Large ribosomal subunit protein uL15 (159 aa).

Residues 1–11 (MKLNELRDNEG) are compositionally biased toward basic and acidic residues. The tract at residues 1 to 40 (MKLNELRDNEGARYQSKRLGRGIGSGKGKTSGKGVKGQTS) is disordered. Residues 21 to 35 (RGIGSGKGKTSGKGV) are compositionally biased toward gly residues.

This sequence belongs to the universal ribosomal protein uL15 family. In terms of assembly, part of the 50S ribosomal subunit.

Functionally, binds to the 23S rRNA. This chain is Large ribosomal subunit protein uL15, found in Paramagnetospirillum magneticum (strain ATCC 700264 / AMB-1) (Magnetospirillum magneticum).